A 278-amino-acid chain; its full sequence is Pantothenate synthetase (278 aa).

26–33 is a binding site for ATP; the sequence is MGNLHEGH. Histidine 33 acts as the Proton donor in catalysis. Glutamine 57 is a (R)-pantoate binding site. Glutamine 57 is a binding site for beta-alanine. 144 to 147 lines the ATP pocket; the sequence is GKKD. Glutamine 150 contacts (R)-pantoate. ATP contacts are provided by residues glycine 173 and 181–184; that span reads LSSR.

It belongs to the pantothenate synthetase family. As to quaternary structure, homodimer.

Its subcellular location is the cytoplasm. The enzyme catalyses (R)-pantoate + beta-alanine + ATP = (R)-pantothenate + AMP + diphosphate + H(+). It participates in cofactor biosynthesis; (R)-pantothenate biosynthesis; (R)-pantothenate from (R)-pantoate and beta-alanine: step 1/1. In terms of biological role, catalyzes the condensation of pantoate with beta-alanine in an ATP-dependent reaction via a pantoyl-adenylate intermediate. This is Pantothenate synthetase from Neisseria meningitidis serogroup C / serotype 2a (strain ATCC 700532 / DSM 15464 / FAM18).